The primary structure comprises 285 residues: Probable endonuclease 4 (285 aa).

Zn(2+)-binding residues include His69, His109, Glu145, Asp179, His182, His216, Asp229, His231, and Glu261.

It belongs to the AP endonuclease 2 family. The cofactor is Zn(2+).

It catalyses the reaction Endonucleolytic cleavage to 5'-phosphooligonucleotide end-products.. In terms of biological role, endonuclease IV plays a role in DNA repair. It cleaves phosphodiester bonds at apurinic or apyrimidinic (AP) sites, generating a 3'-hydroxyl group and a 5'-terminal sugar phosphate. The chain is Probable endonuclease 4 from Escherichia coli O127:H6 (strain E2348/69 / EPEC).